A 1240-amino-acid chain; its full sequence is ABC transporter B family member 15 (1240 aa).

Helical transmembrane passes span 35-55 (MGLGLIGAVGDGFTTPLVLLI), 82-102 (VALLYVACGSWVVCFLEGYCW), 158-180 (LPNFLMSASTFVGSYIVGFILLW), 184-206 (IVGLPFIVLLVIPGLMYGRALIS), 264-284 (GITIGSNGITFAMWGFMSWYG), and 296-316 (GTVFAVAAAIAIGGVSLGGGL). Residues 35–324 (MGLGLIGAVG…GLSNLKYFFE (290 aa)) enclose the ABC transmembrane type-1 1 domain. An ABC transporter 1 domain is found at 359-595 (VEFKNVKFVY…IDGQYSTLVH (237 aa)). 394–401 (GGSGSGKS) serves as a coordination point for ATP. N-linked (GlcNAc...) asparagine glycosylation is found at Asn542, Asn605, and Asn622. The segment at 617 to 646 (SKDIRNSSRVSTLSRSSSANSVTGPSTIKN) is disordered. The segment covering 623–639 (SSRVSTLSRSSSANSVT) has biased composition (low complexity). N-linked (GlcNAc...) asparagine glycosylation occurs at Asn646. Residues 672 to 960 (ALYGCISATL…AGSMTTDLAK (289 aa)) enclose the ABC transmembrane type-1 2 domain. 2 consecutive transmembrane segments (helical) span residues 681–701 (LFGAIQPAYAYSLGSMVSVYF) and 714–734 (IYALSFVGLAVLSFLINISQH). Asn769 is a glycosylation site (N-linked (GlcNAc...) asparagine). The next 4 membrane-spanning stretches (helical) occupy residues 794–813 (ALVVQTVSAVTIAFTMGLVI), 817–839 (LALVMIAVQPVIIVCFYTRRVLL), 895–915 (SWFAGFGLAMSQSLTSCTWAL), and 923–943 (LIQDGYITAKALFETFMILVS). Residues 995-1233 (VEFLDVDFSY…GPTGIYFSLV (239 aa)) form the ABC transporter 2 domain. N-linked (GlcNAc...) asparagine glycosylation occurs at Asn1015. 1030–1037 (GPSGSGKS) contacts ATP.

Belongs to the ABC transporter superfamily. ABCB family. Multidrug resistance exporter (TC 3.A.1.201) subfamily.

It localises to the membrane. This Arabidopsis thaliana (Mouse-ear cress) protein is ABC transporter B family member 15 (ABCB15).